The following is a 362-amino-acid chain: Sphingolipid delta(4)-desaturase (362 aa).

Residues 1–10 (MAESTATTTA) show a composition bias toward low complexity. Residues 1–20 (MAESTATTTAVPPPAEESWN) are disordered. Helical transmembrane passes span 60-80 (PLTKWIVLGVVSLQFTCAYLL), 90-110 (FFLTAYFIGAFCNQNLFLAIH), and 121-143 (TLYNRAYCLFANLPVGAPFAASF). The Histidine box-1 signature appears at 110 to 114 (HELSH). Residues 147–151 (HMEHH) carry the Histidine box-2 motif. 3 helical membrane passes run 169–189 (LILFDNVLGKAFFCTFQLLFY), 200–220 (PFTLMHFWNIIVQFSFDYLVV), and 228–248 (LAYFFMSSFLAGSLHPTAGHF). The short motif at 290-294 (HIEHH) is the Histidine box-3 element.

Belongs to the fatty acid desaturase type 1 family. DEGS subfamily.

The protein resides in the membrane. It carries out the reaction an N-acylsphinganine + 2 Fe(II)-[cytochrome b5] + O2 + 2 H(+) = an N-acylsphing-4-enine + 2 Fe(III)-[cytochrome b5] + 2 H2O. The protein operates within lipid metabolism; sphingolipid metabolism. Delta(4)-fatty-acid desaturase which introduces a double bond at the 4-position in the long-chain base (LCB) of ceramides. Required for sphingosine biosynthesis. The protein is Sphingolipid delta(4)-desaturase (dsd1) of Schizosaccharomyces pombe (strain 972 / ATCC 24843) (Fission yeast).